The primary structure comprises 229 residues: Pyridoxal phosphate homeostasis protein (229 aa).

An N6-(pyridoxal phosphate)lysine modification is found at K36.

This sequence belongs to the pyridoxal phosphate-binding protein YggS/PROSC family. As to quaternary structure, monomer.

In terms of biological role, pyridoxal 5'-phosphate (PLP)-binding protein, which is involved in PLP homeostasis. This chain is Pyridoxal phosphate homeostasis protein, found in Buchnera aphidicola subsp. Schizaphis graminum (strain Sg).